Here is a 1546-residue protein sequence, read N- to C-terminus: Mediator of RNA polymerase II transcription subunit 14 (1546 aa).

Short sequence motifs (LXXLL motif) lie at residues 51-55 and 468-472; these read LAELL and LPSLL. Disordered regions lie at residues 692–717, 1000–1193, and 1512–1546; these read KSAT…PSGS, GRAP…NRPW, and NPMM…GGPQ. Low complexity-rich tracts occupy residues 693 to 717, 1020 to 1035, and 1061 to 1075; these read SATA…PSGS, GGPS…GSSP, and PSSS…PHPS. Residues 1093–1102 show a composition bias toward pro residues; the sequence is PPAPHMPHPS. Residues 1125 to 1149 are compositionally biased toward polar residues; that stretch reads GPNTLYMQSHQDSPFTAMSPANNQW. Pro residues predominate over residues 1153–1163; sequence PSMPRPSPRPG. A compositionally biased stretch (low complexity) spans 1515-1527; it reads MPMQQLQPQVGPQ.

Belongs to the Mediator complex subunit 14 family. In terms of assembly, component of the Mediator complex.

It is found in the nucleus. Component of the Mediator complex, a coactivator involved in the regulated transcription of nearly all RNA polymerase II-dependent genes. Mediator functions as a bridge to convey information from gene-specific regulatory proteins to the basal RNA polymerase II transcription machinery. Mediator is recruited to promoters by direct interactions with regulatory proteins and serves as a scaffold for the assembly of a functional preinitiation complex with RNA polymerase II and the general transcription factors. The polypeptide is Mediator of RNA polymerase II transcription subunit 14 (MED14) (Drosophila pseudoobscura pseudoobscura (Fruit fly)).